A 114-amino-acid chain; its full sequence is Ribonuclease P protein component (114 aa).

It belongs to the RnpA family. Consists of a catalytic RNA component (M1 or rnpB) and a protein subunit.

The catalysed reaction is Endonucleolytic cleavage of RNA, removing 5'-extranucleotides from tRNA precursor.. RNaseP catalyzes the removal of the 5'-leader sequence from pre-tRNA to produce the mature 5'-terminus. It can also cleave other RNA substrates such as 4.5S RNA. The protein component plays an auxiliary but essential role in vivo by binding to the 5'-leader sequence and broadening the substrate specificity of the ribozyme. The chain is Ribonuclease P protein component from Lactiplantibacillus plantarum (strain ATCC BAA-793 / NCIMB 8826 / WCFS1) (Lactobacillus plantarum).